A 211-amino-acid chain; its full sequence is Ubiquitin-conjugating enzyme E2 S (211 aa).

In terms of domain architecture, UBC core spans 11-157 (HIIRQVYKEV…ARLMTEIHAQ (147 aa)). The active-site Glycyl thioester intermediate is the cysteine 95. The tract at residues 157 to 211 (QGSSLRGKDPTDPCSSASATLVSGDGPMAKKHAGDRDKKLAAKKKTDKKRALRRL) is disordered. The segment covering 197-211 (AAKKKTDKKRALRRL) has biased composition (basic residues).

This sequence belongs to the ubiquitin-conjugating enzyme family.

The enzyme catalyses S-ubiquitinyl-[E1 ubiquitin-activating enzyme]-L-cysteine + [E2 ubiquitin-conjugating enzyme]-L-cysteine = [E1 ubiquitin-activating enzyme]-L-cysteine + S-ubiquitinyl-[E2 ubiquitin-conjugating enzyme]-L-cysteine.. It participates in protein modification; protein ubiquitination. Its function is as follows. Catalyzes the covalent attachment of ubiquitin to other proteins. Acts as an essential factor of the anaphase promoting complex/cyclosome (APC/C), a cell cycle-regulated ubiquitin ligase that controls progression through mitosis. Acts by specifically elongating 'Lys-11'-linked polyubiquitin chains initiated by the E2 enzyme ube2c/ubch10 on APC/C substrates, enhancing the degradation of APC/C substrates by the proteasome and promoting mitotic exit. The polypeptide is Ubiquitin-conjugating enzyme E2 S (ube2s) (Xenopus tropicalis (Western clawed frog)).